The following is a 123-amino-acid chain: Large ribosomal subunit protein bL19 (123 aa).

The protein belongs to the bacterial ribosomal protein bL19 family.

This protein is located at the 30S-50S ribosomal subunit interface and may play a role in the structure and function of the aminoacyl-tRNA binding site. The protein is Large ribosomal subunit protein bL19 of Ureaplasma urealyticum serovar 10 (strain ATCC 33699 / Western).